Here is a 62-residue protein sequence, read N- to C-terminus: Disintegrin atropoimin (62 aa).

Positions 1–62 constitute a Disintegrin domain; it reads EAGEECDCGT…ADCPRNGLYG (62 aa). 5 cysteine pairs are disulfide-bonded: Cys6-Cys21, Cys8-Cys16, Cys15-Cys38, Cys29-Cys35, and Cys34-Cys48. The Cell attachment site motif lies at 41-42; it reads GD.

Belongs to the venom metalloproteinase (M12B) family. P-II subfamily. P-IIa sub-subfamily. As to quaternary structure, monomer. As to expression, expressed by the venom gland.

It is found in the secreted. Functionally, inhibits ADP- (IC(50)=63 nM) and collagen-induced (IC(50)=53 nM) aggregation of human platelets. In vitro, inhibits adhesion of endothelial cells to vitronectin, type-I collagen and, to a lower degree, fibronectin and laminin. The protein is Disintegrin atropoimin of Metlapilcoatlus mexicanus (Central American jumping pitviper).